The following is a 317-amino-acid chain: Putative peptide import ATP-binding protein BruAb2_0797 (317 aa).

Positions 7–250 constitute an ABC transporter domain; it reads LSVRGLAKHY…PQHPYTRALL (244 aa). ATP is bound at residue 43 to 50; sequence GESGSGKT.

It belongs to the ABC transporter superfamily. As to quaternary structure, the complex is composed of two ATP-binding proteins (BruAb2_0796 and BruAb2_0797), two transmembrane proteins (BruAb2_0794) and a solute-binding protein (BruAb2_0792).

The protein resides in the cell inner membrane. Functionally, probably part of an ABC transporter complex that could be involved in peptide import. Probably responsible for energy coupling to the transport system. The chain is Putative peptide import ATP-binding protein BruAb2_0797 from Brucella abortus biovar 1 (strain 9-941).